A 629-amino-acid polypeptide reads, in one-letter code: 1-deoxy-D-xylulose-5-phosphate synthase (629 aa).

Thiamine diphosphate-binding positions include His-73 and 114 to 116 (GHA). Asp-145 contributes to the Mg(2+) binding site. Thiamine diphosphate is bound by residues 146 to 147 (GA), Asn-174, Tyr-284, and Glu-360. Asn-174 serves as a coordination point for Mg(2+).

This sequence belongs to the transketolase family. DXPS subfamily. Homodimer. Mg(2+) is required as a cofactor. Thiamine diphosphate serves as cofactor.

The enzyme catalyses D-glyceraldehyde 3-phosphate + pyruvate + H(+) = 1-deoxy-D-xylulose 5-phosphate + CO2. It participates in metabolic intermediate biosynthesis; 1-deoxy-D-xylulose 5-phosphate biosynthesis; 1-deoxy-D-xylulose 5-phosphate from D-glyceraldehyde 3-phosphate and pyruvate: step 1/1. Functionally, catalyzes the acyloin condensation reaction between C atoms 2 and 3 of pyruvate and glyceraldehyde 3-phosphate to yield 1-deoxy-D-xylulose-5-phosphate (DXP). This chain is 1-deoxy-D-xylulose-5-phosphate synthase, found in Thermomicrobium roseum (strain ATCC 27502 / DSM 5159 / P-2).